The primary structure comprises 1305 residues: Nonribosomal peptide synthetase hkm11 (1305 aa).

An adenylation region spans residues 278 to 672 (TYGELDRWAK…GEIEHHLRPK (395 aa)). One can recognise a Carrier domain in the interval 788–864 (APTTEQEALL…SLASRMRQYN (77 aa)). An O-(pantetheine 4'-phosphoryl)serine modification is found at Ser-825. Positions 926-1166 (KGQLDRHQLQ…LCLNITAVRV (241 aa)) are condensation.

Belongs to the NRP synthetase family.

It carries out the reaction hancockiamide D + (E)-cinnamate + ATP = hancockiamide A + AMP + diphosphate. The catalysed reaction is hancockiamide H + (E)-cinnamate + ATP = hancockiamide G + AMP + diphosphate. Its pathway is secondary metabolite biosynthesis. Its function is as follows. Nonribosomal peptide synthetase; part of the gene cluster that mediates the biosynthesis of hancockiamides, an unusual new family of N-cinnamoylated piperazines. The NRPS hkm10 and the NmrA-like reductase hkm9 are proposed to convert two molecules of L-Phe to the intermediary piperazine called xenocockiamide A. Xenocockiamide A is then converted to hancockiamide D via a series of hydroxylations and O-methylations. The tyrosinase hkm6 may catalyze an aromatic hydroxylation, then the 2-oxoglutarate-dependent Fe(II) dioxygenase hkm4 and the FAD-dependent phenol hydroxylase hkm7 may catalyze consecutive hydroxylations to install 2 more hydroxy groups, and the methyltransferase hkm8 probably catalyzes two methylations using 2 molecules of S-adenosyl-L-methionine (SAM). The NRPS hkm11 activates and transfers trans-cinnamate supplied by the PAL hkm12 to hancockiamide D and produces hancockiamide A. NRPS Hkm11 has the flexibility to tolerate the bulky hancockiamide G as a substrate and the absence of the acetyl-transferase hkm3 opens up the opportunity for hkm11 to introduce a second N-cinnamoyl moiety. The cytochrome P450 monooxygenase hkm5 catalyzes the methylenedioxy bridge formation, converting hancockiamide A into hancockiamide G. Hkm5 can also convert hancockiamide B into hancockiamide C, and hancockiamide D into hancockiamide H. The N-acetyltransferase hkm3 finally transfers an acetyl group to 1-N of piperazine, converting hancockiamide A into hancockiamide B and hancockiamide G into hancockiamide C. The polypeptide is Nonribosomal peptide synthetase hkm11 (Aspergillus hancockii).